Here is a 400-residue protein sequence, read N- to C-terminus: 8-amino-7-oxononanoate synthase (400 aa).

Position 21 (R21) interacts with substrate. A pyridoxal 5'-phosphate-binding site is contributed by 112–113 (GY). H137 is a binding site for substrate. S183, H211, and T239 together coordinate pyridoxal 5'-phosphate. K242 is modified (N6-(pyridoxal phosphate)lysine). T358 is a substrate binding site.

This sequence belongs to the class-II pyridoxal-phosphate-dependent aminotransferase family. BioF subfamily. In terms of assembly, homodimer. Requires pyridoxal 5'-phosphate as cofactor.

It carries out the reaction 6-carboxyhexanoyl-[ACP] + L-alanine + H(+) = (8S)-8-amino-7-oxononanoate + holo-[ACP] + CO2. The protein operates within cofactor biosynthesis; biotin biosynthesis. Its function is as follows. Catalyzes the decarboxylative condensation of pimeloyl-[acyl-carrier protein] and L-alanine to produce 8-amino-7-oxononanoate (AON), [acyl-carrier protein], and carbon dioxide. The sequence is that of 8-amino-7-oxononanoate synthase from Burkholderia lata (strain ATCC 17760 / DSM 23089 / LMG 22485 / NCIMB 9086 / R18194 / 383).